A 532-amino-acid chain; its full sequence is Glucan synthesis regulatory protein (532 aa).

A disordered region spans residues threonine 374–isoleucine 532. Residues methionine 381 to serine 393 are compositionally biased toward low complexity. The segment covering proline 447–serine 457 has biased composition (polar residues). The segment covering serine 475 to glycine 516 has biased composition (basic and acidic residues).

It belongs to the KNR4/SMI1 family.

Functionally, involved in the regulation of 1,3-beta-glucan synthase activity and cell-wall formation. In Neurospora crassa (strain ATCC 24698 / 74-OR23-1A / CBS 708.71 / DSM 1257 / FGSC 987), this protein is Glucan synthesis regulatory protein (cot-2).